Reading from the N-terminus, the 255-residue chain is Pro-thyrotropin-releasing hormone (255 aa).

Positions Met-1–Ala-24 are cleaved as a signal peptide. The disordered stretch occupies residues Arg-76 to Ala-102. Proline amide occurs at positions 79 and 111. Gln-154 carries the pyrrolidone carboxylic acid modification. Position 156 is a proline amide (Pro-156). Residue Gln-172 is modified to Pyrrolidone carboxylic acid. Proline amide is present on Pro-174. Over residues Gln-184–Gln-202 the composition is skewed to basic and acidic residues. Disordered regions lie at residues Gln-184–Gly-214 and Gln-235–Glu-255. Pro-204 bears the Proline amide mark. Residues Gln-235–Gln-244 show a composition bias toward polar residues.

Belongs to the TRH family.

The protein localises to the secreted. Functionally, functions as a regulator of the biosynthesis of TSH in the anterior pituitary gland and as a neurotransmitter/ neuromodulator in the central and peripheral nervous systems. The sequence is that of Pro-thyrotropin-releasing hormone (Trh) from Rattus norvegicus (Rat).